Consider the following 411-residue polypeptide: Protein phosphatase 1 regulatory subunit 36 (411 aa).

As to quaternary structure, interacts with PPP1CA.

In terms of biological role, inhibits phosphatase activity of protein phosphatase 1 (PP1) complexes. This chain is Protein phosphatase 1 regulatory subunit 36 (Ppp1r36), found in Rattus norvegicus (Rat).